The sequence spans 440 residues: Chromosome partition protein MukF (440 aa).

A leucine-zipper region spans residues 208–236 (LSETSGTLRELQDTLDAAGDKLQANLLRI).

It belongs to the MukF family. Interacts, and probably forms a ternary complex, with MukE and MukB via its C-terminal region. The complex formation is stimulated by calcium or magnesium. It is required for an interaction between MukE and MukB.

Its subcellular location is the cytoplasm. It localises to the nucleoid. Its function is as follows. Involved in chromosome condensation, segregation and cell cycle progression. May participate in facilitating chromosome segregation by condensation DNA from both sides of a centrally located replisome during cell division. Not required for mini-F plasmid partitioning. Probably acts via its interaction with MukB and MukE. Overexpression results in anucleate cells. It has a calcium binding activity. This chain is Chromosome partition protein MukF, found in Klebsiella pneumoniae subsp. pneumoniae (strain ATCC 700721 / MGH 78578).